We begin with the raw amino-acid sequence, 205 residues long: Large ribosomal subunit protein bL17c (205 aa).

Residues Met1–Ala89 constitute a chloroplast transit peptide.

This sequence belongs to the bacterial ribosomal protein bL17 family. In terms of assembly, part of the 50S ribosomal subunit.

Its subcellular location is the plastid. It localises to the chloroplast. In terms of biological role, this protein binds directly to 23S ribosomal RNA. The chain is Large ribosomal subunit protein bL17c (RPL17) from Nicotiana tabacum (Common tobacco).